Here is a 437-residue protein sequence, read N- to C-terminus: MNYTTQMDAAKKGIVTKEMEIVAKKENMNVKDLMELVSKGKVAIPANKNHKSLDPEGIGQGLRTKINVNLGISKDCYNIDMELEKVQKAIDMKAEAIMDLSCFGKTEEFRKRLIDMSPAIIGTVPIYDAVGFYDKELKDITSEEFLKVAEKHAENGADFLTIHVGMNRKTAATFKKNPRRMNIVSRGGSLLYAWMELNNKENPFYEGFNKLLDICEKYDVTLSLGDACRPGCIEDSTDASQIEELIALGELTKRAWERNVQVIIEGPGHMTLDEIETNMKIEKKLCHGAPFYVLGPIVTDIAPGYDHITSAIGGAIAATHGADFLCYVTPAEHLRLPNLDDMKEGIIATKIAAHAADLAKGVKGARDWDNAMAKARRDLDWERMFELSIDEEKARRYREESKAKSKDSCTMCGKMCAVRNMNRVTEGKDLNMLRDDD.

Residues Asn-69, Met-98, Tyr-127, His-163, Ser-185–Gly-187, Asp-226–Arg-229, and Glu-265 each bind substrate. Residue His-269 coordinates Zn(2+). Tyr-292 is a substrate binding site. A Zn(2+)-binding site is contributed by His-333. Residues Cys-409, Cys-412, and Cys-416 each coordinate [4Fe-4S] cluster.

Belongs to the ThiC family. The cofactor is [4Fe-4S] cluster.

The enzyme catalyses 5-amino-1-(5-phospho-beta-D-ribosyl)imidazole + S-adenosyl-L-methionine = 4-amino-2-methyl-5-(phosphooxymethyl)pyrimidine + CO + 5'-deoxyadenosine + formate + L-methionine + 3 H(+). The protein operates within cofactor biosynthesis; thiamine diphosphate biosynthesis. Functionally, catalyzes the synthesis of the hydroxymethylpyrimidine phosphate (HMP-P) moiety of thiamine from aminoimidazole ribotide (AIR) in a radical S-adenosyl-L-methionine (SAM)-dependent reaction. This Clostridium botulinum (strain Langeland / NCTC 10281 / Type F) protein is Phosphomethylpyrimidine synthase.